Consider the following 375-residue polypeptide: Growth/differentiation factor 8 (375 aa).

Residues 1-23 form the signal peptide; sequence MQKIVVYVYIYLFVQISVDPVAL. A propeptide spanning residues 24–266 is cleaved from the precursor; that stretch reads DGSSQPTENT…VTDTPKRSRR (243 aa). Asn-71 is a glycosylation site (N-linked (GlcNAc...) asparagine). Disulfide bonds link Cys-272–Cys-282, Cys-281–Cys-340, Cys-309–Cys-372, and Cys-313–Cys-374.

The protein belongs to the TGF-beta family. Homodimer; disulfide-linked.

It localises to the secreted. Functionally, acts specifically as a negative regulator of skeletal muscle growth. In Coturnix coturnix (Common quail), this protein is Growth/differentiation factor 8 (MSTN).